We begin with the raw amino-acid sequence, 351 residues long: MTPSAISPVAAGWIRRWLILMALMVYAIILVGGATRLTDSGLSITEWRPVSGALPPMSEAAWLVEFEKYRATTQYQLTNAGMALSEFQFIYWWEWGHRQIGRLIGLVAVAGFAFFAWRRWLGQGLGWKLVGLIALGGLQGAIGWWMVSSGIGETERVSVAPYRLMTHFTLALLILAVIAWLWLDLGRQQRAGAPRAAQRAAMALMGLIFVQMAAGALVAGLDAGRTYTDWPLMAGEVFPAHYIHAELGVRSFFEGREATQFNHRLLAYGLWAGSLAAAWAFRKTDVHREFAFLAVLVSAQAVWGILTLVNAAPMGLALVHQGLGVVTTLWAVYTVWRAGGPKTVAEINPPA.

The next 8 membrane-spanning stretches (helical) occupy residues 17-37 (WLIL…ATRL), 103-123 (LIGL…WLGQ), 129-149 (LVGL…MVSS), 164-184 (LMTH…LWLD), 201-221 (AMAL…VAGL), 261-281 (FNHR…AWAF), 289-309 (EFAF…LTLV), and 316-336 (LALV…YTVW). Residue His263 coordinates heme. His320 serves as a coordination point for heme.

Belongs to the COX15/CtaA family. Type 2 subfamily. As to quaternary structure, interacts with CtaB. Heme b is required as a cofactor.

It localises to the cell membrane. It catalyses the reaction Fe(II)-heme o + 2 A + H2O = Fe(II)-heme a + 2 AH2. The protein operates within porphyrin-containing compound metabolism; heme A biosynthesis; heme A from heme O: step 1/1. In terms of biological role, catalyzes the conversion of heme O to heme A by two successive hydroxylations of the methyl group at C8. The first hydroxylation forms heme I, the second hydroxylation results in an unstable dihydroxymethyl group, which spontaneously dehydrates, resulting in the formyl group of heme A. This chain is Heme A synthase, found in Hyphomonas neptunium (strain ATCC 15444).